A 336-amino-acid polypeptide reads, in one-letter code: 3-hydroxyisobutyrate dehydrogenase, mitochondrial (336 aa).

The transit peptide at 1 to 36 (MAASLRLLGAASGLRYWSRRLRPAAGSFAAVCSRSV) directs the protein to the mitochondrion. Position 40 to 69 (40 to 69 (TPVGFIGLGNMGNPMAKNLMKHGYPLIIYD)) interacts with NAD(+). Lysine 60 and lysine 76 each carry N6-acetyllysine; alternate. N6-succinyllysine; alternate is present on residues lysine 60 and lysine 76. Residue lysine 95 is modified to N6-succinyllysine. Residues 103 to 104 (LP) and asparagine 108 each bind NAD(+). Lysine 121 carries the post-translational modification N6-acetyllysine. Position 134 (threonine 134) interacts with NAD(+). An N6-succinyllysine modification is found at lysine 141. N6-acetyllysine is present on lysine 145. Lysine 149 carries the N6-acetyllysine; alternate modification. An N6-succinyllysine; alternate modification is found at lysine 149. The active site involves lysine 209. Lysine 238 and lysine 242 each carry N6-acetyllysine; alternate. N6-succinyllysine; alternate is present on residues lysine 238 and lysine 242. An NAD(+)-binding site is contributed by lysine 284. Lysine 297 is modified (N6-succinyllysine). The residue at position 321 (lysine 321) is an N6-acetyllysine; alternate. At lysine 321 the chain carries N6-succinyllysine; alternate.

The protein belongs to the HIBADH-related family. 3-hydroxyisobutyrate dehydrogenase subfamily. In terms of assembly, homodimer.

It localises to the mitochondrion. The catalysed reaction is 3-hydroxy-2-methylpropanoate + NAD(+) = 2-methyl-3-oxopropanoate + NADH + H(+). It functions in the pathway amino-acid degradation; L-valine degradation. This is 3-hydroxyisobutyrate dehydrogenase, mitochondrial (HIBADH) from Pongo abelii (Sumatran orangutan).